The sequence spans 84 residues: Small ribosomal subunit protein bS18 (84 aa).

Belongs to the bacterial ribosomal protein bS18 family. As to quaternary structure, part of the 30S ribosomal subunit. Forms a tight heterodimer with protein bS6.

In terms of biological role, binds as a heterodimer with protein bS6 to the central domain of the 16S rRNA, where it helps stabilize the platform of the 30S subunit. This chain is Small ribosomal subunit protein bS18, found in Helicobacter hepaticus (strain ATCC 51449 / 3B1).